The primary structure comprises 356 residues: Glycerol-1-phosphate dehydrogenase [NAD(P)+] (356 aa).

NAD(+) contacts are provided by residues 103-107 (GRSID) and 125-128 (TAAS). A substrate-binding site is contributed by Asp-130. Position 134 (Ser-134) interacts with NAD(+). Asp-177 serves as a coordination point for substrate. Asp-177 and His-257 together coordinate Zn(2+). His-261 is a binding site for substrate. His-273 contributes to the Zn(2+) binding site.

The protein belongs to the glycerol-1-phosphate dehydrogenase family. The cofactor is Zn(2+).

Its subcellular location is the cytoplasm. The enzyme catalyses sn-glycerol 1-phosphate + NAD(+) = dihydroxyacetone phosphate + NADH + H(+). The catalysed reaction is sn-glycerol 1-phosphate + NADP(+) = dihydroxyacetone phosphate + NADPH + H(+). It functions in the pathway membrane lipid metabolism; glycerophospholipid metabolism. Functionally, catalyzes the NAD(P)H-dependent reduction of dihydroxyacetonephosphate (DHAP or glycerone phosphate) to glycerol 1-phosphate (G1P). The G1P thus generated is used as the glycerophosphate backbone of phospholipids in the cellular membranes of Archaea. The sequence is that of Glycerol-1-phosphate dehydrogenase [NAD(P)+] from Methanosarcina mazei (strain ATCC BAA-159 / DSM 3647 / Goe1 / Go1 / JCM 11833 / OCM 88) (Methanosarcina frisia).